Consider the following 296-residue polypeptide: Bifunctional protein FolD (296 aa).

NADP(+) contacts are provided by residues 166–168 (GRS), Ser191, and Ile232.

This sequence belongs to the tetrahydrofolate dehydrogenase/cyclohydrolase family. In terms of assembly, homodimer.

The enzyme catalyses (6R)-5,10-methylene-5,6,7,8-tetrahydrofolate + NADP(+) = (6R)-5,10-methenyltetrahydrofolate + NADPH. It catalyses the reaction (6R)-5,10-methenyltetrahydrofolate + H2O = (6R)-10-formyltetrahydrofolate + H(+). The protein operates within one-carbon metabolism; tetrahydrofolate interconversion. In terms of biological role, catalyzes the oxidation of 5,10-methylenetetrahydrofolate to 5,10-methenyltetrahydrofolate and then the hydrolysis of 5,10-methenyltetrahydrofolate to 10-formyltetrahydrofolate. The sequence is that of Bifunctional protein FolD from Cereibacter sphaeroides (strain ATCC 17023 / DSM 158 / JCM 6121 / CCUG 31486 / LMG 2827 / NBRC 12203 / NCIMB 8253 / ATH 2.4.1.) (Rhodobacter sphaeroides).